Reading from the N-terminus, the 23-residue chain is Aurein-4.2 (23 aa).

It belongs to the frog skin active peptide (FSAP) family. Aurein subfamily. In terms of tissue distribution, expressed by the skin dorsal glands.

The protein localises to the secreted. In terms of biological role, has no antimicrobial or anticancer activity. This is Aurein-4.2 from Ranoidea aurea (Green and golden bell frog).